The chain runs to 63 residues: Large ribosomal subunit protein bL32 (63 aa).

The protein belongs to the bacterial ribosomal protein bL32 family.

The polypeptide is Large ribosomal subunit protein bL32 (Lacticaseibacillus paracasei (strain ATCC 334 / BCRC 17002 / CCUG 31169 / CIP 107868 / KCTC 3260 / NRRL B-441) (Lactobacillus paracasei)).